Here is an 85-residue protein sequence, read N- to C-terminus: Acylphosphatase (85 aa).

An Acylphosphatase-like domain is found at 3-85; it reads AARFVVSGVV…PARFRRLKTL (83 aa). Catalysis depends on residues R18 and N36. Residues 66 to 85 are disordered; that stretch reads PPRSRRSRARPARFRRLKTL.

This sequence belongs to the acylphosphatase family.

The catalysed reaction is an acyl phosphate + H2O = a carboxylate + phosphate + H(+). This chain is Acylphosphatase (acyP), found in Xanthomonas axonopodis pv. citri (strain 306).